We begin with the raw amino-acid sequence, 358 residues long: Alanine racemase (358 aa).

The Proton acceptor; specific for D-alanine role is filled by Lys35. Lys35 carries the N6-(pyridoxal phosphate)lysine modification. Substrate is bound at residue Arg130. Residue Tyr255 is the Proton acceptor; specific for L-alanine of the active site. Residue Met303 coordinates substrate.

This sequence belongs to the alanine racemase family. It depends on pyridoxal 5'-phosphate as a cofactor.

It carries out the reaction L-alanine = D-alanine. Its pathway is amino-acid biosynthesis; D-alanine biosynthesis; D-alanine from L-alanine: step 1/1. Functionally, catalyzes the interconversion of L-alanine and D-alanine. May also act on other amino acids. In Shewanella sp. (strain W3-18-1), this protein is Alanine racemase (alr).